A 365-amino-acid chain; its full sequence is Chorismate synthase (365 aa).

The disordered stretch occupies residues 41-61; it reads IQKELDRRRPGQSEVSTPRHE. Arg-48 provides a ligand contact to NADP(+). FMN contacts are provided by residues 125-127, Gly-285, 300-304, and Arg-327; these read RSS and KPTPS.

The protein belongs to the chorismate synthase family. FMNH2 serves as cofactor.

The enzyme catalyses 5-O-(1-carboxyvinyl)-3-phosphoshikimate = chorismate + phosphate. The protein operates within metabolic intermediate biosynthesis; chorismate biosynthesis; chorismate from D-erythrose 4-phosphate and phosphoenolpyruvate: step 7/7. In terms of biological role, catalyzes the anti-1,4-elimination of the C-3 phosphate and the C-6 proR hydrogen from 5-enolpyruvylshikimate-3-phosphate (EPSP) to yield chorismate, which is the branch point compound that serves as the starting substrate for the three terminal pathways of aromatic amino acid biosynthesis. This reaction introduces a second double bond into the aromatic ring system. This is Chorismate synthase from Methanosarcina barkeri (strain Fusaro / DSM 804).